The chain runs to 161 residues: Vasotocin-neurophysin VT (161 aa).

The signal sequence occupies residues M1 to A19. An intrachain disulfide couples C20 to C25. Residue G28 is modified to Glycine amide. Intrachain disulfides connect C41–C85, C44–C58, C52–C75, C59–C65, C92–C104, C98–C116, and C105–C110.

This sequence belongs to the vasopressin/oxytocin family. Seven disulfide bonds are present in neurophysin.

It localises to the secreted. In terms of biological role, vasotocin is an antidiuretic hormone. The protein is Vasotocin-neurophysin VT of Gallus gallus (Chicken).